The primary structure comprises 221 residues: Catechol O-methyltransferase (221 aa).

The S-adenosyl-L-methionine site is built by valine 41, glycine 65, leucine 67, serine 71, glutamate 89, histidine 94, alanine 118, and aspartate 139. 3 residues coordinate Mg(2+): aspartate 139, aspartate 165, and asparagine 166.

This sequence belongs to the class I-like SAM-binding methyltransferase superfamily. Cation-dependent O-methyltransferase family. As to quaternary structure, homodimer. The cofactor is Mg(2+).

It carries out the reaction a catechol + S-adenosyl-L-methionine = a guaiacol + S-adenosyl-L-homocysteine + H(+). The metal ion affects the meta and para-regiospecificity of the enzyme as well as the enzyme activity and thermal stability. In terms of biological role, catechol O-methyltransferase that can use various catechol-like compounds. Can produce vanillic acid (meta-form) and iso-vanillic acid (para-form) from protocatechuic acid (PCA). Does not have a regiospecificity, and produces the meta- and para-forms of the products in equal proportion. In Niastella koreensis (strain DSM 17620 / KACC 11465 / NBRC 106392 / GR20-10), this protein is Catechol O-methyltransferase.